A 147-amino-acid polypeptide reads, in one-letter code: Hemoglobin subunit epsilon-Y2 (147 aa).

The Globin domain occupies 3 to 147 (NFTAEEKTLI…VATALSHKYH (145 aa)). Serine 51 carries the phosphoserine modification. Residues histidine 64 and histidine 93 each coordinate heme b.

Belongs to the globin family. As to expression, high expression in yolk sac blood islands, fetal liver, and embryonic erythrocytes. Very low levels in adult liver and spleen.

Its function is as follows. Hemoglobin epsilon chain is a beta-type chain found in early embryos. The chain is Hemoglobin subunit epsilon-Y2 (Hbb-y) from Mus musculus (Mouse).